We begin with the raw amino-acid sequence, 359 residues long: Peptide chain release factor 1 (359 aa).

Position 236 is an N5-methylglutamine (Q236).

Belongs to the prokaryotic/mitochondrial release factor family. In terms of processing, methylated by PrmC. Methylation increases the termination efficiency of RF1.

It is found in the cytoplasm. Its function is as follows. Peptide chain release factor 1 directs the termination of translation in response to the peptide chain termination codons UAG and UAA. This is Peptide chain release factor 1 from Streptococcus thermophilus (strain ATCC BAA-250 / LMG 18311).